Here is a 364-residue protein sequence, read N- to C-terminus: Aminomethyltransferase (364 aa).

It belongs to the GcvT family. As to quaternary structure, the glycine cleavage system is composed of four proteins: P, T, L and H.

It carries out the reaction N(6)-[(R)-S(8)-aminomethyldihydrolipoyl]-L-lysyl-[protein] + (6S)-5,6,7,8-tetrahydrofolate = N(6)-[(R)-dihydrolipoyl]-L-lysyl-[protein] + (6R)-5,10-methylene-5,6,7,8-tetrahydrofolate + NH4(+). Its function is as follows. The glycine cleavage system catalyzes the degradation of glycine. This chain is Aminomethyltransferase, found in Escherichia coli O17:K52:H18 (strain UMN026 / ExPEC).